An 86-amino-acid chain; its full sequence is Small ribosomal subunit protein bS16 (86 aa).

It belongs to the bacterial ribosomal protein bS16 family.

In Myxococcus xanthus (strain DK1622), this protein is Small ribosomal subunit protein bS16.